Reading from the N-terminus, the 598-residue chain is Nuclear receptor subfamily 4 group A member 1 (598 aa).

Disordered stretches follow at residues 1–43 (MPCI…PEAA) and 128–151 (GSDYYGSPCSAPSPSTPSFQPPQL). A compositionally biased stretch (low complexity) spans 134–145 (SPCSAPSPSTPS). The segment at 171 to 466 (RAWTEQLPKA…PAEGKLIFCS (296 aa)) is required for nuclear import. A DNA-binding region (nuclear receptor) is located at residues 264–339 (EGRCAVCGDN…VGMVKEVVRT (76 aa)). NR C4-type zinc fingers lie at residues 267-287 (CAVCGDNASCQHYGVRTCEGC) and 303-327 (CLANKDCPVDKRRRNRCQFCRFQKC). Residues 268–354 (AVCGDNASCQ…RRGRLPSKPK (87 aa)) are required for binding NBRE-containing DNA. The interval 299-361 (AKYICLANKD…KPKQPPETSP (63 aa)) is required for the interaction with RXRA. Serine 341 bears the Phosphoserine; by PKA mark. Residues 341–361 (SLKGRRGRLPSKPKQPPETSP) form a disordered region. The residue at position 351 (serine 351) is a Phosphoserine; by PKA, RPS6KA1 and RPS6KA3. The region spanning 360-595 (SPAHLLTSLV…PIVDKIFMDT (236 aa)) is the NR LBD domain. A binds lipopolysaccharide region spans residues 521–544 (PRRVEELQNRIASCLKEHVSAEAG). Positions 584–595 (PPPIVDKIFMDT) are AF-2.

It belongs to the nuclear hormone receptor family. NR4 subfamily. In terms of assembly, binds the NGFI-B response element (NBRE) as a monomer. Binds the Nur response element (NurRE), consisting of two inverse NBRE-related octanucleotide repeats separated by 6 base-pairs, as a dimer. Interacts (via N-terminus) with NLRP3 (via LRR repeat domain); the interaction is direct, requires binding of NR4A1/Nur77 to NBRE-containing dsDNA and lipopolysaccharide, and leads to non-canonical NLRP3 inflammasome activation. Interacts with GADD45GIP1. Interacts with STK11. Interacts with IFI27. Heterodimer (via DNA-binding domain) with RXRA (via C-terminus); DNA-binding of the heterodimer is enhanced by 9-cis retinoic acid. Competes for the RXRA interaction with EP300 and thereby attenuates EP300 mediated acetylation of RXRA. Interacts with NCOA1. Interacts with NCOA2. Interacts with NCOA3. The cofactor is Zn(2+). Post-translationally, phosphorylated at Ser-351 by RPS6KA1 and RPS6KA3 in response to mitogenic or stress stimuli. Acetylated by p300/CBP, acetylation increases stability. Deacetylated by HDAC1.

It localises to the nucleus. The protein localises to the cytoplasm. Its subcellular location is the cytosol. It is found in the mitochondrion. Orphan nuclear receptor. Binds the NGFI-B response element (NBRE) 5'-AAAGGTCA-3'. Binds 9-cis-retinoic acid outside of its ligand-binding (NR LBD) domain. Participates in energy homeostasis by sequestrating the kinase STK11 in the nucleus, thereby attenuating cytoplasmic AMPK activation. Regulates the inflammatory response in macrophages by regulating metabolic adaptations during inflammation, including repressing the transcription of genes involved in the citric acid cycle (TCA). Inhibits NF-kappa-B signaling by binding to low-affinity NF-kappa-B binding sites, such as at the IL2 promoter. May act concomitantly with NR4A2 in regulating the expression of delayed-early genes during liver regeneration. Plays a role in the vascular response to injury. In terms of biological role, in the cytosol, upon its detection of both bacterial lipopolysaccharide (LPS) and NBRE-containing mitochondrial DNA released by GSDMD pores during pyroptosis, it promotes non-canonical NLRP3 inflammasome activation by stimulating association of NLRP3 and NEK7. The sequence is that of Nuclear receptor subfamily 4 group A member 1 (NR4A1) from Bos taurus (Bovine).